Here is a 2368-residue protein sequence, read N- to C-terminus: Highly reducing polyketide synthase cla2 (2368 aa).

The region spanning 10–434 is the Ketosynthase family 3 (KS3) domain; sequence QIPIAIVGLG…GTNGLVVLEA (425 aa). Residues Cys-182, His-317, and His-357 each act as for beta-ketoacyl synthase activity in the active site. Positions 548 to 877 are malonyl-CoA:ACP transacylase (MAT) domain; sequence FVFTGQGAQW…RGQNALDTSL (330 aa). Ser-638 (for malonyltransferase activity) is an active-site residue. The interval 936–1071 is N-terminal hotdog fold; the sequence is HSMIGLKQPM…GLVAIEYTNK (136 aa). The interval 936–1175 is dehydratase (DH) domain; that stretch reads HSMIGLKQPM…AIFQSIFGST (240 aa). Residues 936–1255 enclose the PKS/mFAS DH domain; the sequence is HSMIGLKQPM…MTEPEVGDDA (320 aa). The active-site Proton acceptor; for dehydratase activity is His-968. The C-terminal hotdog fold stretch occupies residues 1099 to 1255; the sequence is PLMIRREKFY…MTEPEVGDDA (157 aa). The active-site Proton donor; for dehydratase activity is Asp-1165. Residues 1655-1967 are enoylreductase (ER) domain; that stretch reads GFLDSLQFIK…QGKHRGKLVL (313 aa). The tract at residues 1991–2170 is catalytic ketoreductase (KRc) domain; that stretch reads ATYLIIGGLG…AVAVNLTIIR (180 aa). The Carrier domain occupies 2283–2360; that stretch reads QASEIITEGL…VLAKTIASRS (78 aa). Ser-2320 bears the O-(pantetheine 4'-phosphoryl)serine mark.

It participates in secondary metabolite biosynthesis. Functionally, highly reducing polyketide synthase; part of the gene cluster that mediates the biosynthesis of cladosporin, a tricyclic octaketide that acts as an antimalarial agent though inhibition of the Plasmodium falciparum lysyl-tRNA synthetase. The highly reducing polyketide synthase cla2 is responsible for biosynthesis up to the pentaketide stage, including of the tetrahydropyran (THP) ring, whereas the three subsequent ketide extensions with no reduction are catalyzed by the non-reducing polyketide synthase cla3. This chain is Highly reducing polyketide synthase cla2, found in Cladosporium cladosporioides.